A 208-amino-acid polypeptide reads, in one-letter code: Small ribosomal subunit protein uS4 (208 aa).

Residues 98-161 form the S4 RNA-binding domain; it reads RRLDNTIYRL…RQSPIILEAQ (64 aa).

It belongs to the universal ribosomal protein uS4 family. As to quaternary structure, part of the 30S ribosomal subunit. Contacts protein S5. The interaction surface between S4 and S5 is involved in control of translational fidelity.

Functionally, one of the primary rRNA binding proteins, it binds directly to 16S rRNA where it nucleates assembly of the body of the 30S subunit. In terms of biological role, with S5 and S12 plays an important role in translational accuracy. The sequence is that of Small ribosomal subunit protein uS4 from Solidesulfovibrio magneticus (strain ATCC 700980 / DSM 13731 / RS-1) (Desulfovibrio magneticus).